Consider the following 233-residue polypeptide: Small ribosomal subunit protein uS3 (233 aa).

Positions 39 to 107 constitute a KH type-2 domain; sequence VRKYLTKELE…PAQINIAEVR (69 aa). Residues 214-233 form a disordered region; that stretch reads VEQPEKPSAQPKKQQRKGRK.

It belongs to the universal ribosomal protein uS3 family. Part of the 30S ribosomal subunit. Forms a tight complex with proteins S10 and S14.

Binds the lower part of the 30S subunit head. Binds mRNA in the 70S ribosome, positioning it for translation. This chain is Small ribosomal subunit protein uS3, found in Pectobacterium atrosepticum (strain SCRI 1043 / ATCC BAA-672) (Erwinia carotovora subsp. atroseptica).